The sequence spans 564 residues: MAHSKEVPSFRWTQSLRRGLSQFTQTVKSDVLKDAKLIADSIDFNQVAQVQRALRKTKRGEEDLNKLRDLNKEVDRLMSMRSVQRNTVFKAGDLGRVERMELASGLGNLKTKFRRAETGSQGVYMGNLSQSQLAKRSEILRTLGFQQQGTGGNGVVRVWDVKDPSKLNNQFGSVPALTIACMTVQGGETMNSVIQALTSLGLLYTVKYPNLSDLDRLTQEHDCLQIVTKDESSINISGYNFSLSAAVKAGASILDDGNMLETIRVTPDNFSSLIKSTIQVKRREGMFIDEKPGNRNPYENLLYKLCLSGDGWPYIGSRSQIIGRSWDNTSIDLTRKPVAGPRQPEKNGQNLRLANLTEIQEAVIREAVGKLDPTNTLWLDIEGPATDPVEMALFQPAGSKYIHCFRKPHDEKGFKNGSRHSHGILMKDIEDAMPGVLSYVIGLLPPDMVVTTQGSDDIRKLFDLHGRRDLKLVDVRLTSEQARQFDQQVWEKFGHLCKHHNGVVVSKKKRDKDAPFKLASSEPHCALLDCIMFQSVLDGKLYEEELTPLLPPSLLFLPKAAYAL.

The interval L54–I236 is binding site for the cap structure m7GTP. Residues D380 and E382 each coordinate Mn(2+). Residues E390, C497, H500, and C525 each coordinate Zn(2+). Residue D529 coordinates Mn(2+).

This sequence belongs to the arenaviridae nucleocapsid protein family. As to quaternary structure, homomultimerizes to form the nucleocapsid. Binds to viral genomic RNA. Interacts with glycoprotein G2. Interacts with protein Z; this interaction probably directs the encapsidated genome to budding sites. Interacts with protein L; this interaction does not interfere with Z-L interaction. Interacts with host IKBKE (via Protein kinase domain); the interaction inhibits IKBKE kinase activity.

Its subcellular location is the virion. The protein localises to the host cytoplasm. Its function is as follows. Encapsidates the genome, protecting it from nucleases. The encapsidated genomic RNA is termed the nucleocapsid (NC). Serves as template for viral transcription and replication. The increased presence of protein N in host cell does not seem to trigger the switch from transcription to replication as observed in other negative strain RNA viruses. Through the interaction with host IKBKE, strongly inhibits the phosphorylation and nuclear translocation of host IRF3, a protein involved in interferon activation pathway, leading to the inhibition of interferon-beta and IRF3-dependent promoters activation. Also encodes a functional 3'-5' exoribonuclease that degrades preferentially dsRNA substrates and thereby participates in the suppression of interferon induction. In Akodon azarae (Azara's grass mouse), this protein is Nucleoprotein.